Reading from the N-terminus, the 107-residue chain is uncharacterized protein (107 aa).

A disordered region spans residues 88-107 (GSTPWGSGRQVNAARPIGGR).

Its subcellular location is the virion. This is an uncharacterized protein from Acanthamoeba polyphaga (Amoeba).